The chain runs to 338 residues: Ketol-acid reductoisomerase (NADP(+)) (338 aa).

The KARI N-terminal Rossmann domain maps to 1-181 (MQVYYDKDCD…GGGRTGIIET (181 aa)). Residues 24 to 27 (YGSQ), Arg-47, Ser-50, Ser-52, and 82 to 85 (DEFQ) contribute to the NADP(+) site. Residue His-107 is part of the active site. Gly-133 is a binding site for NADP(+). Residues 182–327 (TFKDETETDL…EKLRSMMPWI (146 aa)) form the KARI C-terminal knotted domain. Mg(2+) contacts are provided by Asp-190, Glu-194, Glu-226, and Glu-230. Ser-251 serves as a coordination point for substrate.

This sequence belongs to the ketol-acid reductoisomerase family. The cofactor is Mg(2+).

It catalyses the reaction (2R)-2,3-dihydroxy-3-methylbutanoate + NADP(+) = (2S)-2-acetolactate + NADPH + H(+). The catalysed reaction is (2R,3R)-2,3-dihydroxy-3-methylpentanoate + NADP(+) = (S)-2-ethyl-2-hydroxy-3-oxobutanoate + NADPH + H(+). It functions in the pathway amino-acid biosynthesis; L-isoleucine biosynthesis; L-isoleucine from 2-oxobutanoate: step 2/4. It participates in amino-acid biosynthesis; L-valine biosynthesis; L-valine from pyruvate: step 2/4. In terms of biological role, involved in the biosynthesis of branched-chain amino acids (BCAA). Catalyzes an alkyl-migration followed by a ketol-acid reduction of (S)-2-acetolactate (S2AL) to yield (R)-2,3-dihydroxy-isovalerate. In the isomerase reaction, S2AL is rearranged via a Mg-dependent methyl migration to produce 3-hydroxy-3-methyl-2-ketobutyrate (HMKB). In the reductase reaction, this 2-ketoacid undergoes a metal-dependent reduction by NADPH to yield (R)-2,3-dihydroxy-isovalerate. The sequence is that of Ketol-acid reductoisomerase (NADP(+)) from Hahella chejuensis (strain KCTC 2396).